The primary structure comprises 390 residues: uncharacterized protein (390 aa).

Belongs to the glycosyltransferase group 1 family. Glycosyltransferase 4 subfamily.

This is an uncharacterized protein from Methanocaldococcus jannaschii (strain ATCC 43067 / DSM 2661 / JAL-1 / JCM 10045 / NBRC 100440) (Methanococcus jannaschii).